The chain runs to 327 residues: 2-methoxy-6-polyprenyl-1,4-benzoquinol methylase, mitochondrial (327 aa).

The transit peptide at 1-49 directs the protein to the mitochondrion; the sequence is MAAPRCCVLWRVCGRGWWRATGHCRLPGCHRSWPWATLGTRSLSQEKRA. S-adenosyl-L-methionine is bound by residues Thr117, Asp171, and 199–200; that span reads DA.

This sequence belongs to the class I-like SAM-binding methyltransferase superfamily. MenG/UbiE family. In terms of assembly, component of a multi-subunit COQ enzyme complex, composed of at least COQ3, COQ4, COQ5, COQ6, COQ7 and COQ9. Interacts with PYURF; the interaction is direct, stabilizes COQ5 protein and associates PYURF with COQ enzyme complex.

The protein localises to the mitochondrion inner membrane. The catalysed reaction is 2-methoxy-6-(all-trans-decaprenyl)benzene-1,4-diol + S-adenosyl-L-methionine = 5-methoxy-2-methyl-3-(all-trans-decaprenyl)benzene-1,4-diol + S-adenosyl-L-homocysteine + H(+). It functions in the pathway cofactor biosynthesis; ubiquinone biosynthesis. Its function is as follows. Methyltransferase required for the conversion of 2-decaprenyl-6-methoxy-1,4-benzoquinol (DDMQH2) to 2-decaprenyl-3-methyl-6-methoxy-1,4-benzoquinol (DMQH2). In Mus musculus (Mouse), this protein is 2-methoxy-6-polyprenyl-1,4-benzoquinol methylase, mitochondrial.